A 224-amino-acid chain; its full sequence is MSEDNFDDEFDGSLPSGPRHPMARRFRGYLPVVVDVETGGFNSATDALLEIAATTVGMDEKGFLFPEHTYFFRIEPFEGANIEPAALEFTGIKLDHPLRMAVQEEAALTEIFRGIRKALKANGCKRAILVGHNSSFDLGFLNAAVARTGIKRNPFHPFSSFDTATLAGLAYGQTVLAKACQAAGMEFDNREAHSARYDTEKTAELFCGIVNRWKEMGGWMDDDD.

The Exonuclease domain maps to 32-206 (VVVDVETGGF…YDTEKTAELF (175 aa)). Positions 35, 37, 193, and 198 each coordinate Mg(2+). H193 functions as the Proton donor/acceptor in the catalytic mechanism.

The protein belongs to the RNase T family. In terms of assembly, homodimer. Mg(2+) is required as a cofactor.

In terms of biological role, trims short 3' overhangs of a variety of RNA species, leaving a one or two nucleotide 3' overhang. Responsible for the end-turnover of tRNA: specifically removes the terminal AMP residue from uncharged tRNA (tRNA-C-C-A). Also appears to be involved in tRNA biosynthesis. In Pseudomonas aeruginosa (strain UCBPP-PA14), this protein is Ribonuclease T.